The following is a 500-amino-acid chain: Beta-xylosidase (500 aa).

The active-site Proton donor is E160. Residue E277 is the Nucleophile of the active site.

This sequence belongs to the glycosyl hydrolase 39 family.

The catalysed reaction is Hydrolysis of (1-&gt;4)-beta-D-xylans, to remove successive D-xylose residues from the non-reducing termini.. The chain is Beta-xylosidase (xynB) from Thermoanaerobacterium saccharolyticum (strain DSM 8691 / JW/SL-YS485).